A 189-amino-acid chain; its full sequence is Pyridoxal 5'-phosphate synthase subunit PdxT (189 aa).

Residue 46-48 (GES) participates in L-glutamine binding. Cys78 acts as the Nucleophile in catalysis. Residues Arg107 and 136–137 (IR) each bind L-glutamine. Residues His173 and Glu175 each act as charge relay system in the active site.

The protein belongs to the glutaminase PdxT/SNO family. As to quaternary structure, in the presence of PdxS, forms a dodecamer of heterodimers. Only shows activity in the heterodimer.

The enzyme catalyses aldehydo-D-ribose 5-phosphate + D-glyceraldehyde 3-phosphate + L-glutamine = pyridoxal 5'-phosphate + L-glutamate + phosphate + 3 H2O + H(+). The catalysed reaction is L-glutamine + H2O = L-glutamate + NH4(+). It participates in cofactor biosynthesis; pyridoxal 5'-phosphate biosynthesis. In terms of biological role, catalyzes the hydrolysis of glutamine to glutamate and ammonia as part of the biosynthesis of pyridoxal 5'-phosphate. The resulting ammonia molecule is channeled to the active site of PdxS. The chain is Pyridoxal 5'-phosphate synthase subunit PdxT from Roseiflexus sp. (strain RS-1).